Reading from the N-terminus, the 154-residue chain is Peptide deformylase (154 aa).

2 residues coordinate Fe cation: cysteine 90 and histidine 132. Residue glutamate 133 is part of the active site. Residue histidine 136 participates in Fe cation binding.

Belongs to the polypeptide deformylase family. It depends on Fe(2+) as a cofactor.

The enzyme catalyses N-terminal N-formyl-L-methionyl-[peptide] + H2O = N-terminal L-methionyl-[peptide] + formate. Removes the formyl group from the N-terminal Met of newly synthesized proteins. Requires at least a dipeptide for an efficient rate of reaction. N-terminal L-methionine is a prerequisite for activity but the enzyme has broad specificity at other positions. This is Peptide deformylase from Desulforudis audaxviator (strain MP104C).